The primary structure comprises 160 residues: Small ribosomal subunit protein bS6 (160 aa).

Composition is skewed to basic and acidic residues over residues 94 to 119 (EEHE…RGGR) and 125 to 152 (RGDR…REDA). The disordered stretch occupies residues 94–160 (EEHEEGPSAM…DADTAAASEE (67 aa)).

This sequence belongs to the bacterial ribosomal protein bS6 family.

Its function is as follows. Binds together with bS18 to 16S ribosomal RNA. This Rhodopseudomonas palustris (strain BisB5) protein is Small ribosomal subunit protein bS6.